Reading from the N-terminus, the 391-residue chain is Succinate--CoA ligase [ADP-forming] subunit beta (391 aa).

In terms of domain architecture, ATP-grasp spans 9–245 (KQIFAEYGVP…LSEEDPDEVE (237 aa)). Residues Lys-46, 53–55 (GRG), Glu-99, Ala-102, and Glu-107 each bind ATP. Residues Asn-200 and Asp-214 each contribute to the Mg(2+) site. Residues Asn-265 and 322 to 324 (GIV) each bind substrate.

The protein belongs to the succinate/malate CoA ligase beta subunit family. As to quaternary structure, heterotetramer of two alpha and two beta subunits. Mg(2+) is required as a cofactor.

It carries out the reaction succinate + ATP + CoA = succinyl-CoA + ADP + phosphate. The catalysed reaction is GTP + succinate + CoA = succinyl-CoA + GDP + phosphate. It participates in carbohydrate metabolism; tricarboxylic acid cycle; succinate from succinyl-CoA (ligase route): step 1/1. Functionally, succinyl-CoA synthetase functions in the citric acid cycle (TCA), coupling the hydrolysis of succinyl-CoA to the synthesis of either ATP or GTP and thus represents the only step of substrate-level phosphorylation in the TCA. The beta subunit provides nucleotide specificity of the enzyme and binds the substrate succinate, while the binding sites for coenzyme A and phosphate are found in the alpha subunit. This Sulfurovum sp. (strain NBC37-1) protein is Succinate--CoA ligase [ADP-forming] subunit beta.